Consider the following 181-residue polypeptide: NADH-quinone oxidoreductase subunit B (181 aa).

Residues Cys45, Cys46, Cys111, and Cys140 each contribute to the [4Fe-4S] cluster site.

Belongs to the complex I 20 kDa subunit family. As to quaternary structure, NDH-1 is composed of 14 different subunits. Subunits NuoB, C, D, E, F, and G constitute the peripheral sector of the complex. Requires [4Fe-4S] cluster as cofactor.

It localises to the cell inner membrane. It carries out the reaction a quinone + NADH + 5 H(+)(in) = a quinol + NAD(+) + 4 H(+)(out). NDH-1 shuttles electrons from NADH, via FMN and iron-sulfur (Fe-S) centers, to quinones in the respiratory chain. The immediate electron acceptor for the enzyme in this species is believed to be ubiquinone. Couples the redox reaction to proton translocation (for every two electrons transferred, four hydrogen ions are translocated across the cytoplasmic membrane), and thus conserves the redox energy in a proton gradient. The chain is NADH-quinone oxidoreductase subunit B (nuoB) from Thermus thermophilus (strain ATCC BAA-163 / DSM 7039 / HB27).